The primary structure comprises 626 residues: Biosynthetic arginine decarboxylase (626 aa).

N6-(pyridoxal phosphate)lysine is present on Lys-99. Substrate is bound at residue 279 to 289 (VDVGGGLGVDY).

Belongs to the Orn/Lys/Arg decarboxylase class-II family. SpeA subfamily. It depends on Mg(2+) as a cofactor. The cofactor is pyridoxal 5'-phosphate.

The enzyme catalyses L-arginine + H(+) = agmatine + CO2. Its pathway is amine and polyamine biosynthesis; agmatine biosynthesis; agmatine from L-arginine: step 1/1. Catalyzes the biosynthesis of agmatine from arginine. This chain is Biosynthetic arginine decarboxylase, found in Chromobacterium violaceum (strain ATCC 12472 / DSM 30191 / JCM 1249 / CCUG 213 / NBRC 12614 / NCIMB 9131 / NCTC 9757 / MK).